The following is a 1205-amino-acid chain: PAN2-PAN3 deadenylation complex catalytic subunit Pan2 (1205 aa).

WD repeat units follow at residues 153–193 (DESE…QKYA), 195–231 (ETPGVTIMRQTNRFFFCGHTSGKVSLRDLRSFKVEHE), 244–280 (VHGNLLAACGFSSRLTGLACDRFLKVYDLRMMRAITP), and 328–367 (PVGPLLMTFDVSASKQALAFGDSEGCVHLWTDSPEPSFNP). Residues 368 to 484 (YSRETEFALP…PTGREEEPLH (117 aa)) form a linker region. The USP domain occupies 485–924 (TVSKKYRKVT…VPAILYYVKR (440 aa)). Residue Ser784 is modified to Phosphoserine. An Exonuclease domain is found at 975-1147 (VGLDAEFVTL…EDARTALQLY (173 aa)). The a divalent metal cation site is built by Asp978, Glu980, Asp1087, and Asp1139. Residues 1179–1205 (WKVPEPESQSSPKSKAGLRPGALGWVG) form a disordered region. The span at 1184-1193 (PESQSSPKSK) shows a compositional bias: low complexity. Position 1189 is a phosphoserine (Ser1189).

It belongs to the peptidase C19 family. PAN2 subfamily. In terms of assembly, forms a heterotrimer with an asymmetric homodimer of the regulatory subunit PAN3 to form the poly(A)-nuclease (PAN) deadenylation complex. Interacts with PAN3 isoform 1/Pan3L and isoform 3/Pan3S. Interacts with ZFP36. A divalent metal cation is required as a cofactor.

It is found in the cytoplasm. The protein localises to the P-body. It localises to the nucleus. It carries out the reaction Exonucleolytic cleavage of poly(A) to 5'-AMP.. Positively regulated by the regulatory subunit PAN3. In terms of biological role, catalytic subunit of the poly(A)-nuclease (PAN) deadenylation complex, one of two cytoplasmic mRNA deadenylases involved in general and miRNA-mediated mRNA turnover. PAN specifically shortens poly(A) tails of RNA and the activity is stimulated by poly(A)-binding protein (PABP). PAN deadenylation is followed by rapid degradation of the shortened mRNA tails by the CCR4-NOT complex. Deadenylated mRNAs are then degraded by two alternative mechanisms, namely exosome-mediated 3'-5' exonucleolytic degradation, or deadenylation-dependent mRNA decaping and subsequent 5'-3' exonucleolytic degradation by XRN1. Also acts as an important regulator of the HIF1A-mediated hypoxic response. Required for HIF1A mRNA stability independent of poly(A) tail length regulation. This chain is PAN2-PAN3 deadenylation complex catalytic subunit Pan2, found in Rattus norvegicus (Rat).